Here is a 597-residue protein sequence, read N- to C-terminus: Putative diflavin flavoprotein A 3 (597 aa).

Residues 59 to 254 (QRGTTANSYL…YPAQTYAPSH (196 aa)) form a zinc metallo-hydrolase region. One can recognise a Flavodoxin-like domain in the interval 283-421 (VALIYASAYG…MCEEAGTDFA (139 aa)). Residues 449 to 597 (LGRLVGSLCV…VHHRKSGDHY (149 aa)) form a flavodoxin-reductase-like region.

It in the N-terminal section; belongs to the zinc metallo-hydrolase group 3 family. This sequence in the C-terminal section; belongs to the flavodoxin reductase family. It depends on Fe cation as a cofactor.

In terms of biological role, mediates electron transfer from NADH to oxygen, reducing it to water. This modular protein has 3 redox cofactors, in other organisms the same activity requires 2 or 3 proteins. The sequence is that of Putative diflavin flavoprotein A 3 (dfa3) from Synechocystis sp. (strain ATCC 27184 / PCC 6803 / Kazusa).